A 210-amino-acid polypeptide reads, in one-letter code: Probable GTP-binding protein EngB (210 aa).

One can recognise an EngB-type G domain in the interval 25–199; it reads RGIEVAFAGR…RQKLDSWFSE (175 aa). GTP-binding positions include 33–40, 60–64, 78–81, 145–148, and 178–180; these read GRSNAGKS, GRTQL, DLPG, TKAD, and FSS. Residues serine 40 and threonine 62 each contribute to the Mg(2+) site.

Belongs to the TRAFAC class TrmE-Era-EngA-EngB-Septin-like GTPase superfamily. EngB GTPase family. Mg(2+) serves as cofactor.

Functionally, necessary for normal cell division and for the maintenance of normal septation. The sequence is that of Probable GTP-binding protein EngB from Salmonella paratyphi B (strain ATCC BAA-1250 / SPB7).